A 112-amino-acid chain; its full sequence is Colipase (112 aa).

A signal peptide spans 1 to 17 (MKVLVVLLVTLVAVAYA). Positions 18–22 (APGPR) are cleaved as a propeptide — enterostatin, activation peptide. 5 disulfide bridges follow: Cys34–Cys45, Cys40–Cys56, Cys44–Cys78, Cys66–Cys86, and Cys80–Cys104.

The protein belongs to the colipase family. In terms of assembly, forms a 1:1 stoichiometric complex with pancreatic lipase. In terms of tissue distribution, expressed by the pancreas.

The protein localises to the secreted. In terms of biological role, colipase is a cofactor of pancreatic lipase. It allows the lipase to anchor itself to the lipid-water interface. Without colipase the enzyme is washed off by bile salts, which have an inhibitory effect on the lipase. Functionally, enterostatin has a biological activity as a satiety signal. The sequence is that of Colipase from Rattus norvegicus (Rat).